Consider the following 464-residue polypeptide: Soluble pyridine nucleotide transhydrogenase (464 aa).

35 to 44 contacts FAD; sequence DDRPQVGGNC.

It belongs to the class-I pyridine nucleotide-disulfide oxidoreductase family. It depends on FAD as a cofactor.

It localises to the cytoplasm. The catalysed reaction is NAD(+) + NADPH = NADH + NADP(+). Functionally, conversion of NADPH, generated by peripheral catabolic pathways, to NADH, which can enter the respiratory chain for energy generation. The chain is Soluble pyridine nucleotide transhydrogenase from Azotobacter vinelandii (strain DJ / ATCC BAA-1303).